We begin with the raw amino-acid sequence, 136 residues long: Ribonuclease P protein component (136 aa).

It belongs to the RnpA family. Consists of a catalytic RNA component (M1 or rnpB) and a protein subunit.

The enzyme catalyses Endonucleolytic cleavage of RNA, removing 5'-extranucleotides from tRNA precursor.. Functionally, RNaseP catalyzes the removal of the 5'-leader sequence from pre-tRNA to produce the mature 5'-terminus. It can also cleave other RNA substrates such as 4.5S RNA. The protein component plays an auxiliary but essential role in vivo by binding to the 5'-leader sequence and broadening the substrate specificity of the ribozyme. This Burkholderia mallei (strain NCTC 10247) protein is Ribonuclease P protein component.